The following is a 275-amino-acid chain: Putative phosphoenolpyruvate synthase regulatory protein (275 aa).

157–164 (GVSRCGKT) lines the ADP pocket.

Belongs to the pyruvate, phosphate/water dikinase regulatory protein family. PSRP subfamily.

The catalysed reaction is [pyruvate, water dikinase] + ADP = [pyruvate, water dikinase]-phosphate + AMP + H(+). It carries out the reaction [pyruvate, water dikinase]-phosphate + phosphate + H(+) = [pyruvate, water dikinase] + diphosphate. Its function is as follows. Bifunctional serine/threonine kinase and phosphorylase involved in the regulation of the phosphoenolpyruvate synthase (PEPS) by catalyzing its phosphorylation/dephosphorylation. In Bordetella bronchiseptica (strain ATCC BAA-588 / NCTC 13252 / RB50) (Alcaligenes bronchisepticus), this protein is Putative phosphoenolpyruvate synthase regulatory protein.